A 233-amino-acid polypeptide reads, in one-letter code: Homeobox protein not2 (233 aa).

The homeobox DNA-binding region spans 135–194; the sequence is LKRIRTVFTPEQLERLEKEFLKQQYMVGTERVDLASTLNLTETQVKVWFQNRRIKWRKQS. The disordered stretch occupies residues 212–233; it reads SSDHTDDSRETEEEEDDVDVEL. Over residues 220-233 the composition is skewed to acidic residues; that stretch reads RETEEEEDDVDVEL.

Localized to the dorsal lip of the blastopore (Spemann organizer) during early gastrulation, after which expression continues in tissues derived from the organizer. Expressed in the notochord during mid-gastrulation, the chordoneural hinge, notochord and ventral spinal cord of the tailbud at stage 22, and finally the tip of the tail in the tadpole (stage 35).

The protein localises to the nucleus. Its function is as follows. Transcriptional repressor. Plays a fundamental role in notochord formation, acting within the mesodermal region. Acts downstream of gsc and upstream of chrd and foxa4-A/pintallavis. The protein is Homeobox protein not2 of Xenopus laevis (African clawed frog).